A 127-amino-acid chain; its full sequence is Alpha-hordothionin (127 aa).

A signal peptide spans 1–18 (MVCLLILGLVLEQVQVEG). 4 disulfides stabilise this stretch: Cys21/Cys57, Cys22/Cys49, Cys30/Cys47, and Cys34/Cys43. Residues 64–127 (LALVSNSDEP…GDAGLTSLTA (64 aa)) constitute a propeptide, acidic domain.

Belongs to the plant thionin (TC 1.C.44) family. 4 C-C subfamily.

It localises to the secreted. Functionally, thionins are small plant proteins which are toxic to animal cells. They seem to exert their toxic effect at the level of the cell membrane. Their precise function is not known. The chain is Alpha-hordothionin (THI1.1) from Hordeum vulgare (Barley).